The primary structure comprises 236 residues: Exosome complex component Rrp4 (236 aa).

An S1 motif domain is found at 64-133; it reads GDKVIGKIIE…EIKESWLTLK (70 aa). One can recognise a KH domain in the interval 141–199; the sequence is EGGHMVLIHASRVPRVIGKGGGMVNMVKELTSTRIIIGQNGLIWIDGPIEGVTMAIAAI.

This sequence belongs to the RRP4 family. In terms of assembly, component of the archaeal exosome complex. Forms a trimer of Rrp4 and/or Csl4 subunits. The trimer associates with a hexameric ring-like arrangement composed of 3 Rrp41-Rrp42 heterodimers.

It is found in the cytoplasm. Functionally, non-catalytic component of the exosome, which is a complex involved in RNA degradation. Increases the RNA binding and the efficiency of RNA degradation. Confers strong poly(A) specificity to the exosome. This Thermoplasma volcanium (strain ATCC 51530 / DSM 4299 / JCM 9571 / NBRC 15438 / GSS1) protein is Exosome complex component Rrp4.